We begin with the raw amino-acid sequence, 1411 residues long: DNA-directed RNA polymerase subunit beta' (1411 aa).

Zn(2+) contacts are provided by C70, C72, C85, and C88. Mg(2+) is bound by residues D458, D460, and D462. Positions 813, 887, 894, and 897 each coordinate Zn(2+). Residues 1384–1411 (AEAAEMATTGSDEAPEVEGSGVESGSAE) form a disordered region.

This sequence belongs to the RNA polymerase beta' chain family. In terms of assembly, the RNAP catalytic core consists of 2 alpha, 1 beta, 1 beta' and 1 omega subunit. When a sigma factor is associated with the core the holoenzyme is formed, which can initiate transcription. The cofactor is Mg(2+). Requires Zn(2+) as cofactor.

It carries out the reaction RNA(n) + a ribonucleoside 5'-triphosphate = RNA(n+1) + diphosphate. Its function is as follows. DNA-dependent RNA polymerase catalyzes the transcription of DNA into RNA using the four ribonucleoside triphosphates as substrates. This Paracidovorax citrulli (strain AAC00-1) (Acidovorax citrulli) protein is DNA-directed RNA polymerase subunit beta'.